A 608-amino-acid chain; its full sequence is Protein FAM151A (608 aa).

The helical transmembrane segment at 14–34 (WILAGSVSMTLVLAISMILGL) threads the bilayer. The segment at 588–608 (RHRPSSRTGPSYVEGFPGESR) is disordered.

The protein belongs to the menorin family.

Its subcellular location is the membrane. The polypeptide is Protein FAM151A (Fam151a) (Rattus norvegicus (Rat)).